Here is a 256-residue protein sequence, read N- to C-terminus: Ribonuclease 3 (256 aa).

The 123-residue stretch at 3 to 125 folds into the RNase III domain; it reads LDALQQRLGY…IFGAVFLDGG (123 aa). Glutamate 38 contacts Mg(2+). Aspartate 42 is a catalytic residue. The Mg(2+) site is built by aspartate 111 and glutamate 114. Glutamate 114 is a catalytic residue. The 71-residue stretch at 152-222 folds into the DRBM domain; the sequence is DAKTLLQEYL…AKLALDEAHR (71 aa). The interval 226–256 is disordered; the sequence is QLVKRSRAERTGKTRKQATPPDPQLSLRLKE.

Belongs to the ribonuclease III family. In terms of assembly, homodimer. The cofactor is Mg(2+).

Its subcellular location is the cytoplasm. It catalyses the reaction Endonucleolytic cleavage to 5'-phosphomonoester.. In terms of biological role, digests double-stranded RNA. Involved in the processing of primary rRNA transcript to yield the immediate precursors to the large and small rRNAs (23S and 16S). Processes some mRNAs, and tRNAs when they are encoded in the rRNA operon. Processes pre-crRNA and tracrRNA of type II CRISPR loci if present in the organism. The chain is Ribonuclease 3 from Ralstonia pickettii (strain 12J).